Consider the following 82-residue polypeptide: Small ribosomal subunit protein eS27A (82 aa).

The C4-type zinc finger occupies 37 to 59 (CPGCLNITTVFSHAQTAVTCESC). Cys40 bears the S-methylcysteine mark.

This sequence belongs to the eukaryotic ribosomal protein eS27 family. As to quaternary structure, component of the small ribosomal subunit (SSU). Mature yeast ribosomes consist of a small (40S) and a large (60S) subunit. The 40S small subunit contains 1 molecule of ribosomal RNA (18S rRNA) and 33 different proteins (encoded by 57 genes). The large 60S subunit contains 3 rRNA molecules (25S, 5.8S and 5S rRNA) and 46 different proteins (encoded by 81 genes). It depends on Zn(2+) as a cofactor. The N-terminus is not modified.

It localises to the cytoplasm. Its function is as follows. Component of the ribosome, a large ribonucleoprotein complex responsible for the synthesis of proteins in the cell. The small ribosomal subunit (SSU) binds messenger RNAs (mRNAs) and translates the encoded message by selecting cognate aminoacyl-transfer RNA (tRNA) molecules. The large subunit (LSU) contains the ribosomal catalytic site termed the peptidyl transferase center (PTC), which catalyzes the formation of peptide bonds, thereby polymerizing the amino acids delivered by tRNAs into a polypeptide chain. The nascent polypeptides leave the ribosome through a tunnel in the LSU and interact with protein factors that function in enzymatic processing, targeting, and the membrane insertion of nascent chains at the exit of the ribosomal tunnel. The polypeptide is Small ribosomal subunit protein eS27A (Saccharomyces cerevisiae (strain ATCC 204508 / S288c) (Baker's yeast)).